The following is a 286-amino-acid chain: 4-diphosphocytidyl-2-C-methyl-D-erythritol kinase (286 aa).

Lys-13 is an active-site residue. 96–106 contacts ATP; sequence PMGGGIGGGSS. Residue Asp-138 is part of the active site.

The protein belongs to the GHMP kinase family. IspE subfamily.

The enzyme catalyses 4-CDP-2-C-methyl-D-erythritol + ATP = 4-CDP-2-C-methyl-D-erythritol 2-phosphate + ADP + H(+). The protein operates within isoprenoid biosynthesis; isopentenyl diphosphate biosynthesis via DXP pathway; isopentenyl diphosphate from 1-deoxy-D-xylulose 5-phosphate: step 3/6. Its function is as follows. Catalyzes the phosphorylation of the position 2 hydroxy group of 4-diphosphocytidyl-2C-methyl-D-erythritol. The chain is 4-diphosphocytidyl-2-C-methyl-D-erythritol kinase from Pseudoalteromonas atlantica (strain T6c / ATCC BAA-1087).